Consider the following 966-residue polypeptide: Integrator complex subunit 7 (966 aa).

2 positions are modified to phosphoserine: S338 and S809. Residues L941–F966 form a disordered region.

Belongs to the Integrator subunit 7 family. In terms of assembly, component of the Integrator complex, composed of core subunits INTS1, INTS2, INTS3, INTS4, INTS5, INTS6, INTS7, INTS8, INTS9/RC74, INTS10, INTS11/CPSF3L, INTS12, INTS13, INTS14 and INTS15. The core complex associates with protein phosphatase 2A subunits PPP2CA and PPP2R1A, to form the Integrator-PP2A (INTAC) complex. Interacts with NABP2.

It localises to the nucleus. Its subcellular location is the chromosome. The protein resides in the cytoplasm. Component of the integrator complex, a multiprotein complex that terminates RNA polymerase II (Pol II) transcription in the promoter-proximal region of genes. The integrator complex provides a quality checkpoint during transcription elongation by driving premature transcription termination of transcripts that are unfavorably configured for transcriptional elongation: the complex terminates transcription by (1) catalyzing dephosphorylation of the C-terminal domain (CTD) of Pol II subunit POLR2A/RPB1 and SUPT5H/SPT5, (2) degrading the exiting nascent RNA transcript via endonuclease activity and (3) promoting the release of Pol II from bound DNA. The integrator complex is also involved in terminating the synthesis of non-coding Pol II transcripts, such as enhancer RNAs (eRNAs), small nuclear RNAs (snRNAs), telomerase RNAs and long non-coding RNAs (lncRNAs). May be not involved in the recruitment of cytoplasmic dynein to the nuclear envelope by different components of the INT complex. Plays a role in DNA damage response (DDR) signaling during the S phase. The polypeptide is Integrator complex subunit 7 (Ints7) (Mus musculus (Mouse)).